Here is a 486-residue protein sequence, read N- to C-terminus: Cardiolipin synthase A (486 aa).

Helical transmembrane passes span 3-23 (TFYTVISWLLVFSYWLLIAGV) and 38-58 (MAWLLVIYILPLVGIVAYLSF). 2 consecutive PLD phosphodiesterase domains span residues 219-246 (MDLRQHRKIILIDSRIAYTGSMNMVDPR) and 399-426 (KDGLLHTKSVLVDGQLSLVGTVNLDMRS). Active-site residues include H224, K226, D231, H404, K406, and D411.

It belongs to the phospholipase D family. Cardiolipin synthase subfamily. ClsA sub-subfamily.

It localises to the cell inner membrane. It carries out the reaction 2 a 1,2-diacyl-sn-glycero-3-phospho-(1'-sn-glycerol) = a cardiolipin + glycerol. In terms of biological role, catalyzes the reversible phosphatidyl group transfer from one phosphatidylglycerol molecule to another to form cardiolipin (CL) (diphosphatidylglycerol) and glycerol. The protein is Cardiolipin synthase A of Pectobacterium atrosepticum (strain SCRI 1043 / ATCC BAA-672) (Erwinia carotovora subsp. atroseptica).